The primary structure comprises 154 residues: Ribosome maturation factor RimP (154 aa).

Belongs to the RimP family.

It is found in the cytoplasm. Required for maturation of 30S ribosomal subunits. This is Ribosome maturation factor RimP from Prochlorococcus marinus (strain MIT 9303).